Here is a 968-residue protein sequence, read N- to C-terminus: Isoleucine--tRNA ligase (968 aa).

The 'HIGH' region motif lies at 68 to 78 (PYANGALHMGH). Residue Glu-582 coordinates L-isoleucyl-5'-AMP. The 'KMSKS' region motif lies at 623–627 (KMSKS). Position 626 (Lys-626) interacts with ATP. Zn(2+) contacts are provided by Cys-936, Cys-939, Cys-956, and Cys-959.

The protein belongs to the class-I aminoacyl-tRNA synthetase family. IleS type 1 subfamily. Monomer. Requires Zn(2+) as cofactor.

It is found in the cytoplasm. The enzyme catalyses tRNA(Ile) + L-isoleucine + ATP = L-isoleucyl-tRNA(Ile) + AMP + diphosphate. In terms of biological role, catalyzes the attachment of isoleucine to tRNA(Ile). As IleRS can inadvertently accommodate and process structurally similar amino acids such as valine, to avoid such errors it has two additional distinct tRNA(Ile)-dependent editing activities. One activity is designated as 'pretransfer' editing and involves the hydrolysis of activated Val-AMP. The other activity is designated 'posttransfer' editing and involves deacylation of mischarged Val-tRNA(Ile). The protein is Isoleucine--tRNA ligase of Prochlorococcus marinus (strain AS9601).